Consider the following 112-residue polypeptide: Probable fatty acid-binding protein (112 aa).

The protein belongs to the calycin superfamily. Fatty-acid binding protein (FABP) family.

This chain is Probable fatty acid-binding protein, found in Anopheles gambiae (African malaria mosquito).